The primary structure comprises 176 residues: Putative REP-associated tyrosine transposase (176 aa).

Residues H59 and H61 each contribute to the Mg(2+) site. Residue Y148 is the Nucleophile of the active site.

Belongs to the transposase 17 family. RAYT subfamily. Homodimer. The cofactor is Mg(2+).

In terms of biological role, transposase responsible for transposition an insertion sequence (IS) element. Transposition occurs in 2 main steps, excision from the donor DNA 'top strand' into a single strand circle and its subsequent reinsertion into the DNA target. This increases the copy number of the IS. In Haemophilus influenzae (strain ATCC 51907 / DSM 11121 / KW20 / Rd), this protein is Putative REP-associated tyrosine transposase.